A 709-amino-acid polypeptide reads, in one-letter code: SH3 domain-containing kinase-binding protein 1 (709 aa).

SH3 domains are found at residues 1-58 and 98-157; these read MVEA…EIKK and RRRR…ELSG. Phosphoserine occurs at positions 156, 159, 227, and 274. Low complexity predominate over residues 221–239; sequence ETTGSESDGGDSSSTKSEG. A disordered region spans residues 221 to 242; sequence ETTGSESDGGDSSSTKSEGANG. 3 disordered regions span residues 289-309, 372-485, and 511-650; these read GKKL…MDSR, SDFD…KIDL, and DSVI…VSSQ. Threonine 298 bears the Phosphothreonine mark. Residues 311-372 form the SH3 3 domain; it reads KTKDYCKVIF…PDNFVKLLPS (62 aa). A compositionally biased stretch (basic and acidic residues) spans 399–434; sequence TERKHEIKKIPPERPETLPNRTEEKERPEREPKLDL. Position 480 is a phosphoserine (serine 480). The span at 513-528 shows a compositional bias: polar residues; that stretch reads VISSTEKLSHPTTSRP. A compositionally biased stretch (low complexity) spans 535-554; it reads PPSQSLTSSSLSSPDIFDSP. Phosphoserine is present on residues serine 553, serine 555, and serine 565. A compositionally biased stretch (basic and acidic residues) spans 561-575; sequence EEHISLAHRGIDVSK. Over residues 579 to 592 the composition is skewed to polar residues; the sequence is KTVTISQVSDNKTS. Residues 600–623 are compositionally biased toward low complexity; the sequence is MAAASSGPASLSSVASSPMSSSLG. Residues 627-636 are compositionally biased toward polar residues; that stretch reads QRASSPSLFS. A Phosphoserine modification is found at serine 631. A coiled-coil region spans residues 646–708; the sequence is AVSSQAAIEE…VNDIKKALQS (63 aa).

Can self-associate and form homotetramers. Interacts with CD2, F-actin capping protein, PIK3R3, GRB2, EGFR, MET, BLNK, MAP3K4, PDCD6IP, SPRY2, ARHGAP17, ARHGAP27, CRK, BCAR1, SOS1, ASAP1, ARAP3, HIP1R, SYNJ2, INPP5D and STAP1. Interacts with E3 ubiquitin-protein ligase CBL. Interacts with CBLB, but does not interact with CBLC. Two molecules of SH3KBP1 seem to bind through their respective SH3 1 domain to one molecule of CBLB. The interaction with CBL or CBLB and EGFR is increased upon EGF stimulation. The interaction with CBL is attenuated by PDCD6IP. Interacts (via SH3 domains) with ARAP1. The interaction is independent of EGF and does not affect ARAP1 GTPase-activating activity but is involved in regulating ubiquitination and endocytic trafficking of EGFR. ARAP1 competes with CBL for binding to SH3KBP1 and prevents interaction of CBL with SH3KBP1; this is likely to regulate SH3KBP1-mediated internalization of EGFR. Interacts through its proline-rich region with the SH3 domain of endophilins SH3GL1, SH3GL2 and SH3GL3. The SH3KBP1-endophilin complex seems to associate with a complex containing the phosphorylated receptor (EGFR or MET) and phosphorylated CBL. Probably associates with ASAP1 and phosphorylated EGFR. Probably part of a complex consisting of at least SH3KBP1, ASAP1 and ARAP3. Interacts with focal adhesion kinases PTK2/FAK1 and PTK2B/PYK2, probably as a dimer. Interacts with DAB2 and probably associates with chathrin through its interaction with DAB2. Part of a complex consisting of SH3KBP1, DAB2, and clathrin heavy chain. DAB2 and clathrin dissociate from SH3KBP1 following growth factor treatment, enabling interaction with CBL. Interacts with DDN and probably associates with MAGI2 through its interaction with DDN. Interacts with the SH3 domains of SRC tyrosine-protein kinases SRC, LCK, LYN, FGR, FYN and HCK. Interacts with TRADD, BIRC2, TRAF1, TRAF2 and TNFR1, and the association with a TNFR1-associated complex upon stimulation with TNF-alpha seems to be mediated by SRC. Probably part of a complex consisting of at least SH3KBP1, ASAP1 and ARAP3. Interacts (via SH3 domains) with SHKBP1 (via PXXXPR motifs). Interacts with ATX2. Interaction with CBL is abolished in the presence of SHKBP1. Interacts (via SH3 domains) with ZFP36 (via extreme C-terminal region). Interacts with MAP3K4; this interaction enhances the association with ZFP36. Post-translationally, monoubiquitinated by CBL and CBLB after EGF stimulation; probably on its C-terminus.

It localises to the cytoplasm. It is found in the cytoskeleton. Its subcellular location is the cytoplasmic vesicle membrane. The protein localises to the synapse. The protein resides in the synaptosome. It localises to the cell junction. It is found in the focal adhesion. In terms of biological role, adapter protein involved in regulating diverse signal transduction pathways. Involved in the regulation of endocytosis and lysosomal degradation of ligand-induced receptor tyrosine kinases, including EGFR and MET/hepatocyte growth factor receptor, through an association with CBL and endophilins. The association with CBL, and thus the receptor internalization, may be inhibited by an interaction with PDCD6IP and/or SPRY2. Involved in regulation of ligand-dependent endocytosis of the IgE receptor. Attenuates phosphatidylinositol 3-kinase activity by interaction with its regulatory subunit. May be involved in regulation of cell adhesion; promotes the interaction between TTK2B and PDCD6IP. May be involved in the regulation of cellular stress response via the MAPK pathways through its interaction with MAP3K4. Is involved in modulation of tumor necrosis factor mediated apoptosis. Plays a role in the regulation of cell morphology and cytoskeletal organization. Required in the control of cell shape and migration. Has an essential role in the stimulation of B cell activation. The sequence is that of SH3 domain-containing kinase-binding protein 1 (Sh3kbp1) from Mus musculus (Mouse).